Consider the following 210-residue polypeptide: MTASPVLGNLFIIAAPSGAGKSSLIRALLEKHPDQSMQVSVSSTTRAPRPGEVQGVHYHFLSTEEFEQRIDAGEFYEWARVFGNYYGTSRKVVESLLAEGKDVFLDIDWQGAQQVREHHPEVRSVFIVPPSLEILEERLRVRGQDSDEVIAERMAKAQAEMSHYHEFDYLLVNDDFNNSLASLEHIVLAQRQKMPHQQIRYSSVLKELLG.

The 181-residue stretch at 8 to 188 (GNLFIIAAPS…SLASLEHIVL (181 aa)) folds into the Guanylate kinase-like domain. 15–22 (APSGAGKS) is an ATP binding site.

This sequence belongs to the guanylate kinase family.

The protein localises to the cytoplasm. It catalyses the reaction GMP + ATP = GDP + ADP. In terms of biological role, essential for recycling GMP and indirectly, cGMP. The polypeptide is Guanylate kinase (Idiomarina loihiensis (strain ATCC BAA-735 / DSM 15497 / L2-TR)).